The sequence spans 162 residues: B-box zinc finger protein 23 (162 aa).

The Zn(2+) site is built by cysteine 5, cysteine 8, cysteine 28, histidine 33, cysteine 63, cysteine 66, cysteine 86, and histidine 91. Residues 5 to 47 form a B box-type 1; atypical zinc finger; sequence CEVCEKAEAEVLCCSDEAVLCKPCDIKVHEANKLFQRHHRVAL. The B box-type 2; atypical zinc finger occupies 63 to 101; the sequence is CDICQERKGYFFCLEDRAMLCNDCDEAIHTCNSHQRFLL. The segment at 137 to 162 is disordered; sequence QYSSEETEAGNSGEIVHKNPSVILSP.

The protein resides in the nucleus. Probable transcription factor that may be involved in seedling photomorphogenesis. The sequence is that of B-box zinc finger protein 23 from Arabidopsis thaliana (Mouse-ear cress).